An 89-amino-acid chain; its full sequence is Large ribosomal subunit protein bL27 (89 aa).

Belongs to the bacterial ribosomal protein bL27 family.

This chain is Large ribosomal subunit protein bL27, found in Cereibacter sphaeroides (strain ATCC 17029 / ATH 2.4.9) (Rhodobacter sphaeroides).